Here is a 447-residue protein sequence, read N- to C-terminus: ATP-dependent protease ATPase subunit HslU (447 aa).

ATP is bound by residues Ile-18, 60-65 (GVGKTE), Asp-259, Glu-325, and Arg-397.

The protein belongs to the ClpX chaperone family. HslU subfamily. In terms of assembly, a double ring-shaped homohexamer of HslV is capped on each side by a ring-shaped HslU homohexamer. The assembly of the HslU/HslV complex is dependent on binding of ATP.

The protein localises to the cytoplasm. Functionally, ATPase subunit of a proteasome-like degradation complex; this subunit has chaperone activity. The binding of ATP and its subsequent hydrolysis by HslU are essential for unfolding of protein substrates subsequently hydrolyzed by HslV. HslU recognizes the N-terminal part of its protein substrates and unfolds these before they are guided to HslV for hydrolysis. The chain is ATP-dependent protease ATPase subunit HslU from Burkholderia cenocepacia (strain ATCC BAA-245 / DSM 16553 / LMG 16656 / NCTC 13227 / J2315 / CF5610) (Burkholderia cepacia (strain J2315)).